The chain runs to 539 residues: Chaperonin GroEL (539 aa).

ATP contacts are provided by residues 29 to 32 (TLGP), 86 to 90 (DGTTT), Gly413, 477 to 479 (NAA), and Asp493.

The protein belongs to the chaperonin (HSP60) family. In terms of assembly, forms a cylinder of 14 subunits composed of two heptameric rings stacked back-to-back. Interacts with the co-chaperonin GroES.

The protein resides in the cytoplasm. It carries out the reaction ATP + H2O + a folded polypeptide = ADP + phosphate + an unfolded polypeptide.. Together with its co-chaperonin GroES, plays an essential role in assisting protein folding. The GroEL-GroES system forms a nano-cage that allows encapsulation of the non-native substrate proteins and provides a physical environment optimized to promote and accelerate protein folding. The polypeptide is Chaperonin GroEL (Clavibacter michiganensis subsp. michiganensis (strain NCPPB 382)).